A 397-amino-acid chain; its full sequence is Corticosteroid-binding globulin (397 aa).

The first 22 residues, 1 to 22, serve as a signal peptide directing secretion; it reads MSLALYTCLFWLCTSGLWTTQA. 4 N-linked (GlcNAc...) asparagine glycosylation sites follow: N89, N169, N217, and N232. Q247 contributes to the cortisol binding site. N-linked (GlcNAc...) asparagine glycosylation is present at N253. D279 contributes to the cortisol binding site. N320 carries an N-linked (GlcNAc...) asparagine glycan. Residue W385 coordinates cortisol.

It belongs to the serpin family. In terms of tissue distribution, expressed by the liver; secreted in plasma.

The protein resides in the secreted. In terms of biological role, major transport protein for glucocorticoids and progestins in the blood of almost all vertebrate species. The sequence is that of Corticosteroid-binding globulin (Serpina6) from Mus musculus (Mouse).